The chain runs to 239 residues: Increased recombination centers protein 22-2 (239 aa).

Residues 1–19 (MKLSTIFTAFAATIATVAG) form the signal peptide. The Lumenal portion of the chain corresponds to 20–161 (YETTGSKQTV…AAVSFFDPRL (142 aa)). A helical transmembrane segment spans residues 162–182 (IFLELVLLITFAGLIYVGYEI). At 183–239 (WGKQYFKGVAPVKAKKVSAAKASSPVASGPSTTSATGYDTNWIPESHLKQKKTKKVN) the chain is on the cytoplasmic side. Low complexity predominate over residues 201-213 (AAKASSPVASGPS). Residues 201 to 222 (AAKASSPVASGPSTTSATGYDT) are disordered.

The protein belongs to the IRC22 family.

It is found in the endoplasmic reticulum membrane. Its function is as follows. Is probably involved in a pathway contributing to genomic integrity. This is Increased recombination centers protein 22-2 (IRC22-2) from Candida albicans (strain WO-1) (Yeast).